The primary structure comprises 380 residues: Ribosomal RNA small subunit methyltransferase, mitochondrial (380 aa).

The transit peptide at Met-1–Arg-26 directs the protein to the mitochondrion. S-adenosyl-L-methionine-binding residues include His-70, Leu-72, Gly-97, Glu-118, Asp-146, and Asn-161.

Belongs to the class I-like SAM-binding methyltransferase superfamily. rRNA adenine N(6)-methyltransferase family.

It is found in the mitochondrion. The enzyme catalyses adenosine(1914)/adenosine(1915) in 18S rRNA + 4 S-adenosyl-L-methionine = N(6)-dimethyladenosine(1914)/N(6)-dimethyladenosine(1915) in 18S rRNA + 4 S-adenosyl-L-homocysteine + 4 H(+). In terms of biological role, N6-adenine methyltransferase which modifies the AA dinucleotide at the plant mitochondrial 18S rRNA nucleotides A1914 and A1915. Not active as mitochondrial transcription factor. The protein is Ribosomal RNA small subunit methyltransferase, mitochondrial of Arabidopsis thaliana (Mouse-ear cress).